The chain runs to 62 residues: Bowman-Birk type proteinase inhibitor (62 aa).

Disulfide bonds link cysteine 8–cysteine 61, cysteine 9–cysteine 24, cysteine 12–cysteine 57, cysteine 14–cysteine 22, cysteine 31–cysteine 38, cysteine 35–cysteine 50, and cysteine 40–cysteine 48.

Forms a monomer at protein concentrations of below 1 mM. At concentrations of above 2 mM, self-associates.

In terms of biological role, inhibits trypsin but not chymotrypsin. Inhibits the trypsin-like proteinase activity present in larvae of the crop pests Adoxophyes orana, Hyphantria cunea, Lobesia botrana and Ostrinia nubilalis. This Medicago scutellata (Snail medic) protein is Bowman-Birk type proteinase inhibitor.